A 229-amino-acid polypeptide reads, in one-letter code: Putative N-acetylmannosamine-6-phosphate 2-epimerase (229 aa).

The protein belongs to the NanE family.

It catalyses the reaction an N-acyl-D-glucosamine 6-phosphate = an N-acyl-D-mannosamine 6-phosphate. The protein operates within amino-sugar metabolism; N-acetylneuraminate degradation; D-fructose 6-phosphate from N-acetylneuraminate: step 3/5. Converts N-acetylmannosamine-6-phosphate (ManNAc-6-P) to N-acetylglucosamine-6-phosphate (GlcNAc-6-P). In Haemophilus ducreyi (strain 35000HP / ATCC 700724), this protein is Putative N-acetylmannosamine-6-phosphate 2-epimerase.